A 286-amino-acid chain; its full sequence is MAENKEEDVKLGANKFRETQPLGTAAQTDKDYKEPPPAPLFEPGELSSWSFYRAGIAEFMATFLFLYITILTVMGLKRSDSLCSSVGIQGVAWAFGGMIFALVYCTAGISGGHINPAVTFGLFLARKLSLTRAVFYMVMQCLGAICGAGVVKGFMVGPYQRLGGGANVVNPGYTKGDGLGAEIIGTFVLVYTVFSATDAKRNARDSHVPILAPLPIGFAVFLVHLATIPITGTGINPARSLGAAIIYNDEHAWNDHWIFWVGPMIGAALAAIYHQIIIRAMPFHRS.

The segment at 1–35 is disordered; the sequence is MAENKEEDVKLGANKFRETQPLGTAAQTDKDYKEP. Residues 1–55 are Cytoplasmic-facing; that stretch reads MAENKEEDVKLGANKFRETQPLGTAAQTDKDYKEPPPAPLFEPGELSSWSFYRAG. Positions 7 to 18 are enriched in basic and acidic residues; it reads EDVKLGANKFRE. A helical membrane pass occupies residues 56–76; it reads IAEFMATFLFLYITILTVMGL. At 77–89 the chain is on the extracellular side; the sequence is KRSDSLCSSVGIQ. A helical transmembrane segment spans residues 90–110; that stretch reads GVAWAFGGMIFALVYCTAGIS. The Cytoplasmic portion of the chain corresponds to 111–133; the sequence is GGHINPAVTFGLFLARKLSLTRA. The NPA 1 motif lies at 115-117; that stretch reads NPA. A helical transmembrane segment spans residues 134 to 154; the sequence is VFYMVMQCLGAICGAGVVKGF. The Extracellular portion of the chain corresponds to 155 to 175; it reads MVGPYQRLGGGANVVNPGYTK. A helical transmembrane segment spans residues 176 to 196; that stretch reads GDGLGAEIIGTFVLVYTVFSA. Over 197 to 209 the chain is Cytoplasmic; the sequence is TDAKRNARDSHVP. The helical transmembrane segment at 210 to 230 threads the bilayer; sequence ILAPLPIGFAVFLVHLATIPI. Topologically, residues 231 to 257 are extracellular; it reads TGTGINPARSLGAAIIYNDEHAWNDHW. Residues 236–238 carry the NPA 2 motif; the sequence is NPA. Residues 258-278 form a helical membrane-spanning segment; that stretch reads IFWVGPMIGAALAAIYHQIII. Over 279-286 the chain is Cytoplasmic; that stretch reads RAMPFHRS.

This sequence belongs to the MIP/aquaporin (TC 1.A.8) family. PIP (TC 1.A.8.11) subfamily. As to expression, roots, ripening fruit and senescing leaves.

It is found in the cell membrane. Functionally, aquaporins facilitate the transport of water and small neutral solutes across cell membranes. This Solanum lycopersicum (Tomato) protein is Probable aquaporin PIP-type pTOM75.